Consider the following 555-residue polypeptide: Transmembrane protein 87B (555 aa).

The N-terminal stretch at 1-42 (MAAACRSEAGLLPSLLCRRPAGAQLLRVALCLLCWVPAAVDA) is a signal peptide. Over 43–216 (VPELGLWTRT…HGYISASDWP (174 aa)) the chain is Lumenal. 3 N-linked (GlcNAc...) asparagine glycosylation sites follow: N68, N160, and N198. A helical transmembrane segment spans residues 217 to 237 (LMIFYMVMCIVYILYGVLWLL). At 238 to 248 (WSACYWKDILR) the chain is on the cytoplasmic side. A helical membrane pass occupies residues 249-269 (IQFWIAAVIFLGMLEKAVFYS). Topologically, residues 270 to 300 (EYQNINSTGLSTQGLLIFAELISAVKRTLAR) are lumenal. The N-linked (GlcNAc...) asparagine glycan is linked to N275. A helical membrane pass occupies residues 301–321 (LLVIIVSLGYGIVKPRLGTVM). The Cytoplasmic portion of the chain corresponds to 322–323 (HR). The helical transmembrane segment at 324 to 344 (VIGLGLLYLIFAAIEGVMRVI) threads the bilayer. Residues 345-351 (GGSKHLA) are Lumenal-facing. A helical transmembrane segment spans residues 352 to 372 (VVLTDIVLAVIDSIFVWFIFI). Residues 373 to 394 (SLAQTMKTLRLRKNTVKFSLYR) lie on the Cytoplasmic side of the membrane. Residues 395 to 415 (HFTNTLIFAVLASIVFMVWTT) form a helical membrane-spanning segment. The Lumenal portion of the chain corresponds to 416–429 (KTFRIAKCQSDWME). The helical transmembrane segment at 430 to 450 (LWVDDAFWSFLFSVILIVIMF) threads the bilayer. The Cytoplasmic segment spans residues 451 to 555 (LWRPSANNQR…EKMFSSEKIM (105 aa)). Phosphoserine occurs at positions 470, 497, and 534.

This sequence belongs to the LU7TM family. TMEM87 subfamily.

Its subcellular location is the golgi apparatus membrane. In terms of biological role, may be involved in retrograde transport from endosomes to the trans-Golgi network (TGN). The protein is Transmembrane protein 87B of Mus musculus (Mouse).